We begin with the raw amino-acid sequence, 316 residues long: Probable porphobilinogen deaminase (316 aa).

The residue at position 234 (C234) is an S-(dipyrrolylmethanemethyl)cysteine.

This sequence belongs to the HMBS family. Dipyrromethane serves as cofactor.

It carries out the reaction 4 porphobilinogen + H2O = hydroxymethylbilane + 4 NH4(+). It functions in the pathway porphyrin-containing compound metabolism; protoporphyrin-IX biosynthesis; coproporphyrinogen-III from 5-aminolevulinate: step 2/4. In terms of biological role, tetrapolymerization of the monopyrrole PBG into the hydroxymethylbilane pre-uroporphyrinogen in several discrete steps. This is Probable porphobilinogen deaminase from Methanosarcina barkeri (strain Fusaro / DSM 804).